The following is a 363-amino-acid chain: Protein U2 (363 aa).

The N-terminal stretch at 1-18 is a signal peptide; that stretch reads MFCRSPFLGISSWSLASA.

In Homo sapiens (Human), this protein is Protein U2 (U2).